The sequence spans 167 residues: Peptidyl-prolyl cis-trans isomerase-like 3 (167 aa).

The region spanning 1-160 is the PPIase cyclophilin-type domain; the sequence is MSVTLHTSHG…EPVRIENVTI (160 aa).

It belongs to the cyclophilin-type PPIase family. PPIL3 subfamily.

It catalyses the reaction [protein]-peptidylproline (omega=180) = [protein]-peptidylproline (omega=0). Functionally, PPIases accelerate the folding of proteins. It catalyzes the cis-trans isomerization of proline imidic peptide bonds in oligopeptides. This chain is Peptidyl-prolyl cis-trans isomerase-like 3 (CYP10), found in Gibberella zeae (strain ATCC MYA-4620 / CBS 123657 / FGSC 9075 / NRRL 31084 / PH-1) (Wheat head blight fungus).